Reading from the N-terminus, the 539-residue chain is Effector protein hopAB1 (539 aa).

Disordered stretches follow at residues 1 to 93 (MPGI…PEAQ), 163 to 220 (QTVR…RHPQ), 230 to 249 (ASAA…LRRL), and 315 to 336 (RQTT…SGRR). Over residues 18–31 (TDGEPVTEREHDSS) the composition is skewed to basic and acidic residues. The segment covering 181-194 (SSSGSSQRSLIGRS) has biased composition (low complexity).

Belongs to the HopAB family.

It is found in the secreted. Its function is as follows. Effector protein that plays different roles depending on the species and plant cultivars that interact with the pathogen. Acts as a virulence determinant by enhancing the development of disease symptoms and bacterial growth. Acts as an avirulence factor by eliciting hypersensitive response (HR) and plant resistance. This is Effector protein hopAB1 (hopAB1) from Pseudomonas savastanoi pv. phaseolicola (strain 1448A / Race 6) (Pseudomonas syringae pv. phaseolicola (strain 1448A / Race 6)).